The primary structure comprises 262 residues: Acyl-coenzyme A diphosphatase FITM2 (262 aa).

Residues 1 to 23 (MEHLERCAWVLRGTLVRSAVRKY) lie on the Cytoplasmic side of the membrane. Residues 24 to 44 (LPWALAASMLAGSLLKELSPL) form a helical membrane-spanning segment. Over 45 to 57 (PESYLSNKRNVLN) the chain is Lumenal. A helical transmembrane segment spans residues 58 to 78 (VYFVKVAWAWTFCLLLPFIAL). The Cytoplasmic portion of the chain corresponds to 79–93 (TNYHLTGKAGLVLRR). Residues 94 to 114 (LSTLLVGTAIWYVCTAIFSNI) form a helical membrane-spanning segment. Topologically, residues 115 to 145 (EHYTGSCYQSPALEGERKEHQSKQQCHGEGG) are lumenal. The chain crosses the membrane as a helical span at residues 146-166 (FWHGFDISGHSFLLTFCALMI). The active site involves His155. The Cytoplasmic portion of the chain corresponds to 167-190 (VEEMAVLHEVKTDRNHCLHAAITT). The helical transmembrane segment at 191–211 (LVVALGFLTFIWVWMFLCTAV) threads the bilayer. Topologically, residues 212–218 (YFHNLSQ) are lumenal. His214 is a catalytic residue. A helical transmembrane segment spans residues 219 to 239 (KVFGTLFGLLGWYGTYGCWYL). The Cytoplasmic segment spans residues 240–262 (KSFSPGLPPQSSSLNLKQDTYKK).

Belongs to the FIT family. FIT2 subfamily.

It is found in the endoplasmic reticulum membrane. It carries out the reaction an acyl-CoA + H2O = an acyl-4'-phosphopantetheine + adenosine 3',5'-bisphosphate + 2 H(+). The catalysed reaction is (9Z)-octadecenoyl-CoA + H2O = S-(9Z-octadecenoyl)-4'-phosphopantetheine + adenosine 3',5'-bisphosphate + 2 H(+). The enzyme catalyses (5Z,8Z,11Z,14Z)-eicosatetraenoyl-CoA + H2O = S-(5Z,8Z,11Z,14Z-eicosatetraenoyl)-4'-phosphopantetheine + adenosine 3',5'-bisphosphate + 2 H(+). It catalyses the reaction hexadecanoyl-CoA + H2O = S-hexadecanoyl-4'-phosphopantetheine + adenosine 3',5'-bisphosphate + 2 H(+). Its function is as follows. Fatty acyl-coenzyme A (CoA) diphosphatase that hydrolyzes fatty acyl-CoA to yield acyl-4'-phosphopantetheine and adenosine 3',5'-bisphosphate. Preferentially hydrolyzes unsaturated long-chain acyl-CoA substrates such as oleoyl-CoA/(9Z)-octadecenoyl-CoA and arachidonoyl-CoA/(5Z,8Z,11Z,14Z)-eicosatetraenoyl-CoA in the endoplasmic reticulum (ER) lumen. This catalytic activity is required for maintaining ER structure and for lipid droplets (LDs) biogenesis, which are lipid storage organelles involved in maintaining lipid and energy homeostasis. Directly binds to diacylglycerol (DAGs) and triacylglycerol, which is also important for LD biogenesis. May support directional budding of nacent LDs from the ER into the cytosol by reducing DAG levels at sites of LD formation. Plays a role in the regulation of cell morphology and cytoskeletal organization. The polypeptide is Acyl-coenzyme A diphosphatase FITM2 (Bos taurus (Bovine)).